Consider the following 694-residue polypeptide: Follicle-stimulating hormone receptor (694 aa).

The N-terminal stretch at 1–17 is a signal peptide; sequence MALLLVSLLAFLSLGSG. 2 cysteine pairs are disulfide-bonded: C18–C25 and C23–C32. An LRRNT domain is found at 18 to 46; it reads CHHRVCHCSNRVFLCQESKVTEIPSDLPR. Over 18–365 the chain is Extracellular; the sequence is CHHRVCHCSN…EDIMGYDILR (348 aa). LRR repeat units follow at residues 49–72, 73–97, 98–118, 119–143, 144–169, 170–192, 193–216, 217–240, and 241–259; these read LELRFVLTKLRVIPKGAFSGFGDL, EKIEISQNDVLEVIEANVFSNLPKL, HEIRIEKANNLLYIDHDAFQN, LPNLQYLLISNTGIKHLPAVHKIQS, LQKVLLDIQDNINIHTVERNSFMGLS, FESTILRLSKNGIQEIHNCAFNG, TQLDELNLSYNNNLEELPNDVFQG, ASGPVILDISGTRIHSLPNYGLEN, and LKKLRARSTYNLKKLPSLE. N-linked (GlcNAc...) asparagine glycans are attached at residues N191 and N199. Residue N268 is glycosylated (N-linked (GlcNAc...) asparagine). Disulfide bonds link C275-C345, C276-C292, C276-C355, and C292-C337. N-linked (GlcNAc...) asparagine glycosylation occurs at N293. Y334 is modified (sulfotyrosine). Residues 366-386 traverse the membrane as a helical segment; that stretch reads VLIWFISILAITGNIIVLVIL. Residues 387–397 lie on the Cytoplasmic side of the membrane; the sequence is ITSQYKLTVPR. A helical transmembrane segment spans residues 398-420; it reads FLMCNLAFADLCIGIYLLLIASV. Residues 421-442 lie on the Extracellular side of the membrane; it reads DIHTKSQYHNYAIDWQTGAGCD. Residues C441 and C516 are joined by a disulfide bond. A helical transmembrane segment spans residues 443 to 464; sequence AAGFFTVFASELSVYTLTAITL. At 465-484 the chain is on the cytoplasmic side; it reads ERWHTITHAMQLECKVQLRH. Residues 485-507 form a helical membrane-spanning segment; it reads AASVMLVGWIFAFAVALLPIFGI. Residues 508 to 527 are Extracellular-facing; it reads STYMKVSICLPMDIDSPLSQ. The helical transmembrane segment at 528–549 threads the bilayer; sequence LYVMSLLVLNVLAFVVICGCYI. The Cytoplasmic portion of the chain corresponds to 550-572; sequence HIYLTVRNPNIVSSSSDTKIAKR. A helical transmembrane segment spans residues 573–596; that stretch reads MAILIFTDFLCMAPISFFAISASL. Topologically, residues 597–607 are extracellular; the sequence is KVPLITVSKSK. Residues 608–629 form a helical membrane-spanning segment; it reads ILLVLFYPINSCANPFLYAIFT. Residues 630–694 lie on the Cytoplasmic side of the membrane; the sequence is KNFRRDFFIL…LVPLSHLAQN (65 aa).

The protein belongs to the G-protein coupled receptor 1 family. FSH/LSH/TSH subfamily. In terms of assembly, homotrimer. Functions as a homotrimer binding the FSH hormone heterodimer composed of CGA and FSHB. Interacts with ARRB2. Interacts with APPL2; interaction is independent of follicle stimulating hormone stimulation. Post-translationally, N-glycosylated; indirectly required for FSH-binding, possibly via a conformational change that allows high affinity binding of hormone. In terms of processing, sulfated.

It localises to the cell membrane. Its function is as follows. G protein-coupled receptor for follitropin, the follicle-stimulating hormone. Through cAMP production activates the downstream PI3K-AKT and ERK1/ERK2 signaling pathways. The chain is Follicle-stimulating hormone receptor (FSHR) from Equus caballus (Horse).